Here is a 13477-residue protein sequence, read N- to C-terminus: Mucin-3B (13477 aa).

An N-terminal signal peptide occupies residues 1–21 (MQLLGLLSILWMLKSSPGATG). Positions 219–234 (TISSTTRTTERTPLPT) are enriched in low complexity. Disordered stretches follow at residues 219–243 (TISSTTRTTERTPLPTGSIHTTMSP), 327–347 (TRSTPTSETTYPASPTSTVTD), 360–383 (GTLSPTTTLPPTSSSQQTTETPMT), 513–559 (SMTT…PSTL), 622–643 (ATTPTTNLGNTTTETTSHSTPS), 815–839 (TTTNSFTTSANMEPPSTAVATTGTG), 923–968 (TSQT…STTE), 1154–1179 (PSMSASNDRTTHTESISSPPASTSTL), 1480–1511 (SPTVQNTETSSFVSMTSATTPSERPTFTSTEN), 1529–1601 (SISA…FPET), 1619–1638 (MTSTPPITSSVTPTNTVTSM), 1692–1714 (TTSTPTSETTYSTSPTSTVTDSM), 1944–1968 (TTSATMEPPSSSVAATDTGQTTFTS), 2064–2123 (TPNA…IAKS), 2170–2197 (STSMTPSTVSTSIPTSQPKTVNSSSGGI), 2275–2308 (SSSMSESSAGTTHTESISSPPATTSTLHTTAEST), 2442–2462 (RSTPTSETTYPTSPTSTVKGS), 2476–2497 (LSMETSLPPTSSSLPTTETATT), 2509–2537 (SHSTPSFSSSTIHSTVSTPTTVISSGPPT), 2591–2610 (SAMSTSDIPSSPSIQNTETS), 2672–2717 (TSTL…FSSS), 2812–2832 (TTITRSTPTSETTYPISSTST), 2845–2867 (TMTETSSSATSLPLTSPLVSTTE), 2922–2947 (SRIPSSLSTDIPTSQPTTITPSSVGI), 3074–3109 (ETPSSTVATTGTGQTTFTSSTATSPETNTLTPTPDI), 3309–3395 (TTSH…NSNS), 3420–3481 (ITTT…SHST), 3545–3565 (STTSFTSSTATTETTSRSTPS), 3654–3727 (SITT…STTA), 3740–3812 (ITTI…TTAE), 4014–4047 (TETTSRSTPSYTSAITTTETTSHRTPSFTSSIAT), 4067–4106 (TSNSTASLTSSMTTTETTSHSTPSLTSSMTATETTSHSTP), 4182–4249 (TTET…SSIT), 4269–4313 (NSTS…PSFT), 4510–4530 (SHSTPSFNSSITTTETLSHST), 4557–4617 (TETT…STSS), 4630–4651 (YSPSSFTSSITTTESPSHSTPS), 4802–4830 (TSSFTSSITSTETTSHSTPSLTSSITATG), 4953–4986 (HSLPSFTSSSTTTETPSHSPPGFSSSIATSKTIS), 5128–5203 (YTSS…ITTT), 5455–5486 (ITNTESTSRSTPSFTFSTTSTETTSHSTPSFT), 5627–5680 (TTKT…ATSK), 5834–5908 (TTSY…HSPP), 5957–5977 (STPSFTSSITTTETTSQSSPS), 5990–6017 (HSTASFTSSITTTETTSHSTRSITSSIT), 6030–6080 (TSSI…PPIF), 6120–6150 (TTETNSHSPPSFTSSIATTETPSHSPPSFTS), 6172–6197 (TESTSHSTPSFTSSIATTETTSHTPP), 6456–6481 (TETPSHSTPSFPSSITTTQSASHSTP), 6541–6598 (TKTT…TSTS), 6846–6867 (TTGTSSHNTLGLSSSVDTTKTT), 6946–6971 (ITTTETTSHSTPSITSSVTTAERTSH), 6999–7021 (TTESTSHSNPSLTSAITTTETRS), 7067–7093 (TTETTSHSPPSFTSSISITETPSHSPP), 7170–7206 (TETASHSNPSSTSSITTTESTSHSPPRSTSAIATTGI), 7225–7244 (SHSTASFTSSITSTETISHS), 7299–7329 (FTSSITTTESTSQSTPSFTFSTTSTETTSHS), 7400–7433 (SYTSSITTTETPSHSSPSFPSTITSTETISHRTP), 7476–7532 (TETI…TTST), 7578–7600 (TGTSSHSTLGLSSSVTTTKTTSH), 7731–7766 (TEITSHSPPSFTSSSTTTETPSHSTPGFSSSIATSK), 7922–7996 (SHST…PPIF), 8036–8066 (TTETNSHSPPSFTSSIATTETPSHSPPSFTS), 8088–8113 (TESTSHSTPSFTSSIATTETTSHTPP), 8372–8397 (TETPSHSTPSFPSSITTTQSASHSTP), 8457–8514 (TKTT…TSTS), 8762–8783 (TTGTSSHNTLGLSSSVDTTKTT), 8862–8887 (ITTTETTSHSTPSITSSVTTAERTSH), 8915–8941 (TTESTSHSNPSLTSAITTTETRSHSPP), 8983–9009 (TTETTSHSPPSFTSSISITETPSHSPP), 9052–9122 (AETT…TTGI), 9141–9160 (SHSTASFTSSITSTETISHS), 9215–9240 (FTSSITTTESTSQSTPSFTFSTTSTE), 9335–9366 (TSSITTTETPSHSSPSFPSSITSTETISHRTP), 9409–9465 (TETI…TTST), 9566–9589 (SHSTPSFTSSITTTKSTSHSNPSL), 9612–9674 (TTET…PPSF), 9734–9760 (TTSHGTPSLTSLIATTKSTPQNPSSFT), 9828–9859 (TSSITTTETTSHSTPRITSSITTTEKTSHSTP), 9883–9908 (TTTESTSHSNPSLTSAITNTETRSHS), 9921–9973 (TTSH…SKTI), 10076–10099 (SDSTPSFTSSVTTTETTSQSSPSF), 10120–10166 (ITTT…TVPS), 10189–10285 (ITTE…SPLS), 10389–10425 (TSSIATSETPSHSTPSFPSSITTTQSISHSTPSLSSA), 10462–10481 (TTKTTSHSPPSFTASITSTK), 10501–10537 (SHSSPSFTSSSTTTEIPSHSTPGFSSSIATSKTTSTS), 10640–10660 (TTSFPSSITTTETTSHSTPSF), 10750–10828 (TTTE…QRSP), 10887–11032 (TTET…SPSS), 11044–11065 (SHSTPSFTSSITSPETISHSTP), 11276–11317 (TGTE…SPSH), 11446–11482 (STTATPPDSTPSFTSSIATTENTSHSTPSFTSSITTT), 11566–11697 (TTET…PGFS), 11754–11779 (TKTTSHSTPDFTSSIASTKTTSHSTP), 11818–11949 (SIAT…HSPP), 12067–12103 (TSSFTSSITTTETTSQSTPSFTSSIAVTETPSDSTPV), 12186–12220 (PSYTSSIITTKTPSHSTPSFPSSITTTETISHSTP), 12280–12323 (TETT…STPI), 12364–12452 (TTET…TTET), 12468–12578 (EMTS…NTPS), 12616–12639 (FTTAETGVTSTPSSPSSLSTDIPT), 12681–12700 (SSPSIQSTETSSLVGTTSPT), 12785–12805 (IPSTHSSTLQTTPSIPSLQTS), 12985–13011 (TSSMTPESESSIIPNASSSTGTGTVPT), and 13052–13086 (SLPTILRTSSKSTHPSPPTARTSETSVATTQTPTT). Composition is skewed to low complexity over residues 513–538 (SMTTTASGPTTTNTLSSLTSSILSST) and 547–559 (TSHTTTTTPPSTL). The span at 1620–1638 (TSTPPITSSVTPTNTVTSM) shows a compositional bias: low complexity. A compositionally biased stretch (polar residues) spans 1944–1956 (TTSATMEPPSSSV). Residues 1957 to 1968 (AATDTGQTTFTS) show a composition bias toward low complexity. The span at 2066–2091 (NASSMTTSETTYPNSPTGPVTNSMSK) shows a compositional bias: polar residues. Positions 2096–2107 (ASMTQTSSTATS) are enriched in low complexity. The segment covering 2113 to 2123 (PSGSTTEIAKS) has biased composition (polar residues). A compositionally biased stretch (low complexity) spans 2170–2185 (STSMTPSTVSTSIPTS). The span at 2186–2195 (QPKTVNSSSG) shows a compositional bias: polar residues. Composition is skewed to low complexity over residues 2292–2308 (SSPPATTSTLHTTAEST) and 2442–2458 (RSTPTSETTYPTSPTST). Over residues 2591–2603 (SAMSTSDIPSSPS) the composition is skewed to low complexity. 2 stretches are compositionally biased toward low complexity: residues 2929–2944 (STDIPTSQPTTITPSS) and 3074–3097 (ETPSSTVATTGTGQTTFTSSTATS). The span at 3098-3109 (PETNTLTPTPDI) shows a compositional bias: polar residues. Positions 3309-3359 (TTSHSTPSFTSPIATTKTSSHSSPSFTSSIATLETTSHSTPSFTSSITTNS) are enriched in low complexity. Positions 3360 to 3370 (HSTPRFSSSIA) are enriched in polar residues. Residues 3371 to 3385 (TRETTSHSTSSFTPS) are compositionally biased toward low complexity. A compositionally biased stretch (polar residues) spans 3386–3395 (IATTKTNSNS). The segment covering 3420–3452 (ITTTETTSHSTPSFTSSMATTKTTSHSTPSFTS) has biased composition (low complexity). Positions 3453 to 3462 (PIATRETTSH) are enriched in polar residues. The segment covering 3463-3481 (STPSFTSLITTTKTTSHST) has biased composition (low complexity). The segment covering 3740-3749 (ITTIETPSHG) has biased composition (polar residues). Low complexity predominate over residues 3750–3785 (TPSFTSSITSTETTSHSSPSFISSITTTEITSHSTP). A compositionally biased stretch (polar residues) spans 3786–3812 (RFTSSITTMETPSHSTPNFTSSITTAE). Composition is skewed to low complexity over residues 4020–4042 (STPSYTSAITTTETTSHRTPSFT) and 4067–4096 (TSNSTASLTSSMTTTETTSHSTPSLTSSMT). A compositionally biased stretch (polar residues) spans 4097 to 4106 (ATETTSHSTP). Composition is skewed to low complexity over residues 4182 to 4228 (TTET…PSFT) and 4237 to 4249 (TSHSTPSFTSSIT). Low complexity predominate over residues 4557–4574 (TETTSNSSPSFTSSITNT). A compositionally biased stretch (polar residues) spans 4575–4601 (KTTSYSPPGFTSSIPATETTSRSPPGF). Residues 4602–4617 (TSSITTTETTSHSTSS) are compositionally biased toward low complexity. Positions 4802-4827 (TSSFTSSITSTETTSHSTPSLTSSIT) are enriched in low complexity. Low complexity predominate over residues 5137-5158 (TPSHITPSFTSTITTSESTSHS). Over residues 5159 to 5170 (NPSLTSAITTTE) the composition is skewed to polar residues. Low complexity-rich tracts occupy residues 5174–5203 (HSPPIFTSSITTTETTSHNTPSFTSSITTT) and 5458–5486 (TESTSRSTPSFTFSTTSTETTSHSTPSFT). Over residues 5834–5858 (TTSYSTPSITSSITTTERTSHSTPS) the composition is skewed to low complexity. The span at 5859–5874 (YTSSIATRETPSHTVP) shows a compositional bias: polar residues. Positions 5875–5889 (SFTSSITTTESTSHS) are enriched in low complexity. The segment covering 5890-5901 (NPSLTSAITTTE) has biased composition (polar residues). The span at 6045 to 6059 (SFTSSITTTDSTSHS) shows a compositional bias: low complexity. The span at 6060–6071 (NPSLTSAITTTE) shows a compositional bias: polar residues. A compositionally biased stretch (low complexity) spans 6172-6185 (TESTSHSTPSFTSS). Residues 6186-6197 (IATTETTSHTPP) show a composition bias toward polar residues. Over residues 6456–6475 (TETPSHSTPSFPSSITTTQS) the composition is skewed to low complexity. The span at 6852–6867 (HNTLGLSSSVDTTKTT) shows a compositional bias: polar residues. Low complexity predominate over residues 6946–6965 (ITTTETTSHSTPSITSSVTT). Positions 6999–7018 (TTESTSHSNPSLTSAITTTE) are enriched in polar residues. A compositionally biased stretch (low complexity) spans 7172–7206 (TASHSNPSSTSSITTTESTSHSPPRSTSAIATTGI). Composition is skewed to low complexity over residues 7300–7329 (TSSITTTESTSQSTPSFTFSTTSTETTSHS) and 7400–7427 (SYTSSITTTETPSHSSPSFPSTITSTET). The span at 7476-7491 (TETISHSPPSFTSLTN) shows a compositional bias: polar residues. The span at 7492–7532 (STETTSHSPPSFTSSSTTTETPSHSTPGFSSSIATSKTTST) shows a compositional bias: low complexity. Composition is skewed to low complexity over residues 7734-7766 (TSHSPPSFTSSSTTTETPSHSTPGFSSSIATSK) and 7922-7944 (SHSTRSITSSITTTKRTSHSTPS). Residues 7945-7987 (YTSSIATSETPSHTVPSFTSLITTTDSTSHSNPSLTSAITTTE) are compositionally biased toward polar residues. Positions 8088–8101 (TESTSHSTPSFTSS) are enriched in low complexity. The segment covering 8102 to 8113 (IATTETTSHTPP) has biased composition (polar residues). Low complexity predominate over residues 8372 to 8391 (TETPSHSTPSFPSSITTTQS). Positions 8768–8783 (HNTLGLSSSVDTTKTT) are enriched in polar residues. Residues 8862 to 8881 (ITTTETTSHSTPSITSSVTT) show a composition bias toward low complexity. Positions 8915–8934 (TTESTSHSNPSLTSAITTTE) are enriched in polar residues. Composition is skewed to low complexity over residues 9067–9081 (PTTETTSHSPPSFTS) and 9088–9122 (TASHSNPSSTSSITTTESTSHSPPRSTSAIATTGI). Residues 9335-9360 (TSSITTTETPSHSSPSFPSSITSTET) are compositionally biased toward low complexity. The segment covering 9409 to 9424 (TETISHSPPSFTSLTN) has biased composition (polar residues). Low complexity-rich tracts occupy residues 9425–9465 (STET…TTST), 9566–9585 (SHSTPSFTSSITTTKSTSHS), and 9612–9624 (TTETTSHRTPSFT). The span at 9625–9661 (SSIATAETTSHSPPSFTSLITTSETPSHSNPSFTSLI) shows a compositional bias: polar residues. Over residues 9662-9674 (TTTESTSHSPPSF) the composition is skewed to low complexity. Polar residues-rich tracts occupy residues 9892–9903 (NPSLTSAITNTE) and 9921–9933 (TTSHSPPSFTSLI). The span at 9934–9973 (TSTETTSHSPPSFTSSSTTTETPSHSTPGFSSSIATSKTI) shows a compositional bias: low complexity. Positions 10120 to 10130 (ITTTETTSHST) are enriched in low complexity. Residues 10131–10166 (PNITSSVTTTERTSHSTPSYTSSIATGETPSHTVPS) are compositionally biased toward polar residues. 2 stretches are compositionally biased toward low complexity: residues 10196–10271 (HSPP…SFTS) and 10394–10421 (TSETPSHSTPSFPSSITTTQSISHSTPS). Polar residues predominate over residues 10750-10791 (TTTETTSHSPPRFTSSITTTKTPSDSTPVFTPSIATSETSSH). Composition is skewed to low complexity over residues 10792–10828 (STPGYTSSTATTETMSHSTSSFTSSITTTETTSQRSP), 10887–10937 (TTET…SSIT), and 10950–11032 (PSSI…SPSS). The segment covering 11278–11291 (TETTSHSPPHFTSS) has biased composition (low complexity). The segment covering 11292–11317 (ITRTKTTSHRPPTFTSSITTTESPSH) has biased composition (polar residues). Residues 11566–11682 (TTETTSHSIP…SHSTSGFTSS (117 aa)) show a composition bias toward low complexity. 2 stretches are compositionally biased toward polar residues: residues 11683–11697 (NATTETTSHSTPGFS) and 11754–11769 (TKTTSHSTPDFTSSIA). 2 stretches are compositionally biased toward low complexity: residues 11770 to 11779 (STKTTSHSTP) and 11818 to 11880 (SIAT…SHST). 2 stretches are compositionally biased toward polar residues: residues 11881 to 11896 (PSFTSSIATIETTSHS) and 11903 to 11912 (LIPTTKTTLH). Composition is skewed to low complexity over residues 11913 to 11949 (SPPSFTSSITTTKTTSHSTSSLTSSMPTTKTTSHSPP) and 12067 to 12091 (TSSFTSSITTTETTSQSTPSFTSSI). The segment covering 12092–12103 (AVTETPSDSTPV) has biased composition (polar residues). The segment covering 12280–12309 (TETTSHSAPNFSSSITSTETTSHSTPSFTS) has biased composition (low complexity). Residues 12310-12323 (AITSTETTSHSTPI) show a composition bias toward polar residues. Low complexity predominate over residues 12364–12412 (TTETTSHSTPGFASSITTTKTTSHSTPSFTSSIATSNTTSSSTPGFTSS). The segment covering 12413–12439 (IATTETTSRSTPGFTSSIVTTETTSPH) has biased composition (polar residues). A compositionally biased stretch (low complexity) spans 12440-12452 (TPGFTSSITTTET). Residues 12468–12477 (EMTSHSTPSL) show a composition bias toward polar residues. Composition is skewed to low complexity over residues 12478–12569 (TFSI…VTTP), 12624–12639 (TSTPSSPSSLSTDIPT), 12681–12692 (SSPSIQSTETSS), 12794–12805 (QTTPSIPSLQTS), 12990–13003 (PESESSIIPNASSS), and 13073–13086 (TSETSVATTQTPTT). Residues 13130-13163 (SGDRCQLQTRCQNGGQWDGLKCQCPSTFYGSSCE) form the EGF-like domain. Intrachain disulfides connect Cys-13134–Cys-13140 and Cys-13153–Cys-13162. Positions 13172–13297 (DVVETEVGME…DSIKVNNNSK (126 aa)) constitute an SEA domain. Residues 13381-13401 (LVGGLTAGAALLVLLLLALGV) form a helical membrane-spanning segment.

In terms of processing, highly O-glycosylated and probably also N-glycosylated. In terms of tissue distribution, fetal and adult small intestine and fetal and adult colon.

Its subcellular location is the membrane. Major glycoprotein component of a variety of mucus gels. Thought to provide a protective, lubricating barrier against particles and infectious agents at mucosal surfaces. This chain is Mucin-3B, found in Homo sapiens (Human).